A 277-amino-acid chain; its full sequence is Bifunctional protein FolD 1 (277 aa).

NADP(+) contacts are provided by residues glycine 162 to serine 164 and serine 187.

The protein belongs to the tetrahydrofolate dehydrogenase/cyclohydrolase family. In terms of assembly, homodimer.

It catalyses the reaction (6R)-5,10-methylene-5,6,7,8-tetrahydrofolate + NADP(+) = (6R)-5,10-methenyltetrahydrofolate + NADPH. It carries out the reaction (6R)-5,10-methenyltetrahydrofolate + H2O = (6R)-10-formyltetrahydrofolate + H(+). Its pathway is one-carbon metabolism; tetrahydrofolate interconversion. In terms of biological role, catalyzes the oxidation of 5,10-methylenetetrahydrofolate to 5,10-methenyltetrahydrofolate and then the hydrolysis of 5,10-methenyltetrahydrofolate to 10-formyltetrahydrofolate. This Syntrophomonas wolfei subsp. wolfei (strain DSM 2245B / Goettingen) protein is Bifunctional protein FolD 1.